A 176-amino-acid polypeptide reads, in one-letter code: Large ribosomal subunit protein uL6 (176 aa).

The protein belongs to the universal ribosomal protein uL6 family. Part of the 50S ribosomal subunit.

Functionally, this protein binds to the 23S rRNA, and is important in its secondary structure. It is located near the subunit interface in the base of the L7/L12 stalk, and near the tRNA binding site of the peptidyltransferase center. In Burkholderia ambifaria (strain MC40-6), this protein is Large ribosomal subunit protein uL6.